Here is a 700-residue protein sequence, read N- to C-terminus: Inhibitor of carbonic anhydrase (700 aa).

An N-terminal signal peptide occupies residues 1–19 (MRLLICALLCLGTLGLCLA). Transferrin-like domains follow at residues 25 to 347 (IRWC…NLKR) and 355 to 685 (VKWC…NFRQ). Intrachain disulfides connect cysteine 28-cysteine 67, cysteine 38-cysteine 58, cysteine 137-cysteine 213, cysteine 172-cysteine 188, cysteine 175-cysteine 198, cysteine 185-cysteine 196, cysteine 246-cysteine 260, cysteine 358-cysteine 390, cysteine 368-cysteine 381, cysteine 415-cysteine 695, cysteine 438-cysteine 658, cysteine 470-cysteine 545, cysteine 494-cysteine 686, cysteine 504-cysteine 518, cysteine 515-cysteine 528, and cysteine 585-cysteine 599. N-linked (GlcNAc...) asparagine glycosylation occurs at asparagine 664.

It belongs to the transferrin family. Monomer. Interacts (via transferrin-like domain 2) with CA2. N-glycosylated. Detected in blood plasma, heart, kidney, liver, colon, lung, spleen, pancreas and testis (at protein level).

It localises to the secreted. Its function is as follows. Inhibitor for carbonic anhydrase 2 (CA2). Does not bind iron ions. This Mus musculus (Mouse) protein is Inhibitor of carbonic anhydrase.